The primary structure comprises 401 residues: Probable tRNA sulfurtransferase (401 aa).

Residues 60-165 enclose the THUMP domain; sequence EEICSLLKNI…EEATFLTIRN (106 aa). ATP-binding positions include 183–184, 208–209, R265, G287, and Q296; these read ML and HF.

Belongs to the ThiI family.

Its subcellular location is the cytoplasm. It catalyses the reaction [ThiI sulfur-carrier protein]-S-sulfanyl-L-cysteine + a uridine in tRNA + 2 reduced [2Fe-2S]-[ferredoxin] + ATP + H(+) = [ThiI sulfur-carrier protein]-L-cysteine + a 4-thiouridine in tRNA + 2 oxidized [2Fe-2S]-[ferredoxin] + AMP + diphosphate. The enzyme catalyses [ThiS sulfur-carrier protein]-C-terminal Gly-Gly-AMP + S-sulfanyl-L-cysteinyl-[cysteine desulfurase] + AH2 = [ThiS sulfur-carrier protein]-C-terminal-Gly-aminoethanethioate + L-cysteinyl-[cysteine desulfurase] + A + AMP + 2 H(+). It functions in the pathway cofactor biosynthesis; thiamine diphosphate biosynthesis. Its function is as follows. Catalyzes the ATP-dependent transfer of a sulfur to tRNA to produce 4-thiouridine in position 8 of tRNAs, which functions as a near-UV photosensor. Also catalyzes the transfer of sulfur to the sulfur carrier protein ThiS, forming ThiS-thiocarboxylate. This is a step in the synthesis of thiazole, in the thiamine biosynthesis pathway. The sulfur is donated as persulfide by IscS. The protein is Probable tRNA sulfurtransferase of Bacillus velezensis (strain DSM 23117 / BGSC 10A6 / LMG 26770 / FZB42) (Bacillus amyloliquefaciens subsp. plantarum).